Consider the following 200-residue polypeptide: NAD(P)H dehydrogenase (quinone) (200 aa).

Residues 4–191 (VLVLYYSSYG…DIARYQGKHV (188 aa)) enclose the Flavodoxin-like domain. Residues 10–15 (SSYGHV) and 79–81 (TRF) contribute to the FMN site. Tyr-12 is an NAD(+) binding site. Residue Trp-99 coordinates substrate. Residues 114-120 (STGTQHG) and His-135 each bind FMN.

Belongs to the WrbA family. Requires FMN as cofactor.

It catalyses the reaction a quinone + NADH + H(+) = a quinol + NAD(+). The catalysed reaction is a quinone + NADPH + H(+) = a quinol + NADP(+). This chain is NAD(P)H dehydrogenase (quinone), found in Burkholderia orbicola (strain MC0-3).